The sequence spans 482 residues: Ras GTPase-activating protein-binding protein 2 (482 aa).

An NTF2 domain is found at 11–133 (VGREFVRQYY…FYVHNDMFRY (123 aa)). Residues 140–158 (DSEPELDEESEDEVEEEQE) are compositionally biased toward acidic residues. Disordered regions lie at residues 140–171 (DSEP…QENA) and 187–318 (EPLE…EQND). A phosphoserine mark is found at Ser141, Ser149, and Ser225. The tract at residues 142–220 (EPELDEESED…PQVEEKNLEE (79 aa)) is acidic disordered region. Over residues 191 to 225 (ESSHEPEPEPESETKTEELKPQVEEKNLEELEEKS) the composition is skewed to basic and acidic residues. Thr227 bears the Phosphothreonine mark. Ser235 carries the post-translational modification Phosphoserine. Positions 247 to 264 (ASVTSKNLPPSGTVSSSG) are enriched in polar residues. Lys281 is covalently cross-linked (Glycyl lysine isopeptide (Lys-Gly) (interchain with G-Cter in SUMO2)). The segment covering 290–300 (RVREQRPRERP) has biased composition (basic and acidic residues). The 79-residue stretch at 331–409 (HQLFVGNLPH…VRLNVEEKKT (79 aa)) folds into the RRM domain. The residue at position 392 (Lys392) is an N6-succinyllysine. The interval 404–476 (VEEKKTRAAR…GRGTGQMEGR (73 aa)) is RG-rich region. Residues 408 to 432 (KTRAARERETRGGGDDRRDIRRNDR) show a composition bias toward basic and acidic residues. Residues 408–482 (KTRAARERET…MEGRFTGQRR (75 aa)) form a disordered region. Gly residues predominate over residues 433–445 (GPGGPRGIVGGGM). Arg457 is modified (omega-N-methylarginine). Ser466 bears the Phosphoserine mark. Residue Arg468 is modified to Omega-N-methylarginine.

As to quaternary structure, forms homooligomers. Forms heterodimers with G3BP1. Interacts with NFKBIA (via N-terminus). Interacts (via NTF2 domain) with USP10; inhibiting stress granule formation. Interacts (via NTF2 domain) with CAPRIN1; promoting stress granule formation. Associates (via RG-rich region) with 40S ribosome subunits. Interacts with PABPC1. (Microbial infection) Interacts with non-structural protein 3 (via C-terminus) of Sindbis virus and Semliki forest virus; this interaction inhibits the formation of host stress granules on viral mRNAs and the nsp3-G3BP2 complexes bind viral RNAs and probably orchestrate the assembly of viral replication complexes. Post-translationally, (Microbial infection) Cleaved by foot-and-mouth disease virus leader protease; this cleavage suppresses the formation of cytoplasmic stress granules.

The protein resides in the cytoplasm. It is found in the stress granule. Under physiological conditions, G3BP2 adopts a compact state that is stabilized by intramolecular interactions between the RG-rich and the acidic regions that inhibit phase separation. Upon stress, polysomes disassemble and mRNAs are released in an unfolded protein-free state. Binding of unfolded mRNA to G3BP2 outcompetes the intramolecular interactions and RNA-bound G3BP2 adopts an expanded conformation in which the RG-rich region becomes exposed to engage in protein-protein and protein-RNA interactions, allowing physical cross-linking of RNA molecules to form protein-RNA condensates, leading to liquid-liquid phase separation (LLPS). Scaffold protein that plays an essential role in cytoplasmic stress granule formation which acts as a platform for antiviral signaling. Plays an essential role in stress granule formation. Stress granules are membraneless compartments that store mRNAs and proteins, such as stalled translation pre-initiation complexes, in response to stress. Promotes formation of stress granules phase-separated membraneless compartment by undergoing liquid-liquid phase separation (LLPS) upon unfolded RNA-binding: functions as a molecular switch that triggers RNA-dependent LLPS in response to a rise in intracellular free RNA concentrations. The chain is Ras GTPase-activating protein-binding protein 2 from Homo sapiens (Human).